Consider the following 335-residue polypeptide: Taste receptor type 2 member 119 (335 aa).

The Extracellular segment spans residues 1–7 (MMEGHIL). The helical transmembrane segment at 8 to 28 (FFFLVVMVQFVTGVLANGLIV) threads the bilayer. Over 29–43 (VVHAIDLIMWKKMAP) the chain is Cytoplasmic. The helical transmembrane segment at 44–64 (LDLLLFCLATSRIILQLCILF) threads the bilayer. The Extracellular portion of the chain corresponds to 65–81 (AQLCLFSLVRHTLFEDN). Asn81 carries N-linked (GlcNAc...) asparagine glycosylation. The helical transmembrane segment at 82-102 (ITFVFIINELSLWFATWLGVF) threads the bilayer. Over 103–124 (YCAKIATIPHPLFLWLKMRISR) the chain is Cytoplasmic. A helical transmembrane segment spans residues 125–145 (LVPWLILGSVLYVIITTFIHS). The Extracellular portion of the chain corresponds to 146-176 (RETSAILKPIFISLFPKNATQVGTGHATLLS). Asn163 carries an N-linked (GlcNAc...) asparagine glycan. Residues 177-197 (VLVLGLTLPLFIFTVAVLLLI) form a helical membrane-spanning segment. The Cytoplasmic portion of the chain corresponds to 198-224 (YSLWNYSRQMRTMVGTREYSGHAHISA). Residues 225–245 (MLSILSFLILYLSHYMVAVLI) traverse the membrane as a helical segment. The Extracellular segment spans residues 246–256 (STQVLYLGSRT). The chain crosses the membrane as a helical span at residues 257–277 (FVFCLLVIGMYPSIHSIVLIL). Residues 278–335 (GNPKLKRNAKMFIVHCKCCHCTRAWVTSRSPRLSDLPVPPTHPSANKTSCSEACIMPS) are Cytoplasmic-facing. The tract at residues 308–327 (PRLSDLPVPPTHPSANKTSC) is disordered.

Belongs to the G-protein coupled receptor T2R family. In terms of tissue distribution, expressed in subsets of taste receptor cells of the tongue and palate epithelium and exclusively in gustducin-positive cells. Expressed in the duodenum, antrum and fundus (part of the stomach).

It localises to the membrane. Functionally, gustducin-coupled receptor implicated in the perception of bitter compounds in the oral cavity and the gastrointestinal tract. Signals through PLCB2 and the calcium-regulated cation channel TRPM5. This chain is Taste receptor type 2 member 119 (Tas2r119), found in Rattus norvegicus (Rat).